The following is a 37-amino-acid chain: Large ribosomal subunit protein bL36c (37 aa).

Belongs to the bacterial ribosomal protein bL36 family.

The protein resides in the plastid. It localises to the chloroplast. The protein is Large ribosomal subunit protein bL36c of Physcomitrium patens (Spreading-leaved earth moss).